The sequence spans 296 residues: CDP-diacylglycerol--glycerol-3-phosphate 3-phosphatidyltransferase 1, chloroplastic/mitochondrial (296 aa).

The transit peptide at 1 to 39 (MLRSGLASLIVDVNLRRTLRPSPTFSFPAHLSRCIITSR) directs the protein to the chloroplast and mitochondrion. Over residues 62–82 (FSSSSSSEQSRPTSSSRNSFS) the composition is skewed to low complexity. Residues 62–103 (FSSSSSSEQSRPTSSSRNSFSGHGQLDSDDNSSPPPSQSSSK) are disordered. Helical transmembrane passes span 104–124 (VLTL…LLVA), 126–146 (FYVD…AAAI), 164–184 (FGAF…LILL), 189–209 (IQVA…IAII), and 261–281 (VGWL…LSVW).

The protein belongs to the CDP-alcohol phosphatidyltransferase class-I family. The cofactor is Mn(2+).

The protein resides in the plastid. It is found in the chloroplast membrane. Its subcellular location is the mitochondrion membrane. The enzyme catalyses a CDP-1,2-diacyl-sn-glycerol + sn-glycerol 3-phosphate = a 1,2-diacyl-sn-glycero-3-phospho-(1'-sn-glycero-3'-phosphate) + CMP + H(+). The protein operates within phospholipid metabolism; phosphatidylglycerol biosynthesis; phosphatidylglycerol from CDP-diacylglycerol: step 1/2. In terms of biological role, catalyzes the committed step to the synthesis of the acidic phospholipids, including phosphatidylglycerol (PG). Transfers specifically a phosphatidyl group from CDP-diacylglycerol to glycerol-3-phosphate to form phosphatidylglycerophosphate. Cannot catalyze the phosphatidyl group transfer to inositol, serine, choline or phosphatidylglycerol. Possesses high activity with CDP-dipalmitoylglycerol and low activity with CDP-dioleoylglycerol. Essential for chloroplast differentiation and PG accumulation in thylakoids, an essential process for the assembly of antenna-reaction center complexes to optimize energy transfer from antenna pigments, and for subsequent photochemical efficiency of photosystem II (PSII). During cold acclimation (at 5 degrees Celsius), necessary for the photosystem I (PSI) photochemistry, including both reaction center and light-harvesting integrity. But dispensable in mitochondrion, being redundant with PGPS2 for the production of PG and its derivative cardiolipin (CL) in mitochondrial membranes. Together with PGPS2, required for the proper embryo development by providing PG accurate levels. This is CDP-diacylglycerol--glycerol-3-phosphate 3-phosphatidyltransferase 1, chloroplastic/mitochondrial from Arabidopsis thaliana (Mouse-ear cress).